The primary structure comprises 315 residues: Methionyl-tRNA formyltransferase (315 aa).

112-115 (SLLP) contributes to the (6S)-5,6,7,8-tetrahydrofolate binding site.

This sequence belongs to the Fmt family.

It catalyses the reaction L-methionyl-tRNA(fMet) + (6R)-10-formyltetrahydrofolate = N-formyl-L-methionyl-tRNA(fMet) + (6S)-5,6,7,8-tetrahydrofolate + H(+). Its function is as follows. Attaches a formyl group to the free amino group of methionyl-tRNA(fMet). The formyl group appears to play a dual role in the initiator identity of N-formylmethionyl-tRNA by promoting its recognition by IF2 and preventing the misappropriation of this tRNA by the elongation apparatus. The sequence is that of Methionyl-tRNA formyltransferase from Rhizobium rhizogenes (strain K84 / ATCC BAA-868) (Agrobacterium radiobacter).